The sequence spans 168 residues: Endoribonuclease YbeY (168 aa).

Positions 127, 131, and 137 each coordinate Zn(2+).

It belongs to the endoribonuclease YbeY family. The cofactor is Zn(2+).

The protein resides in the cytoplasm. Functionally, single strand-specific metallo-endoribonuclease involved in late-stage 70S ribosome quality control and in maturation of the 3' terminus of the 16S rRNA. This chain is Endoribonuclease YbeY, found in Chromobacterium violaceum (strain ATCC 12472 / DSM 30191 / JCM 1249 / CCUG 213 / NBRC 12614 / NCIMB 9131 / NCTC 9757 / MK).